The primary structure comprises 516 residues: Replication factor C large subunit (516 aa).

Residue 44–51 (GAPGVGKT) participates in ATP binding. A disordered region spans residues 421-516 (RSEAVEAHAG…DGQAGLSEFM (96 aa)). Residues 454–467 (VQSHKSAESGDDTV) are compositionally biased toward basic and acidic residues. A compositionally biased stretch (low complexity) spans 479-496 (QSGASETASATESASDSD). The segment covering 497–508 (ASTDTDADDDDG) has biased composition (acidic residues).

This sequence belongs to the activator 1 small subunits family. RfcL subfamily. As to quaternary structure, heteromultimer composed of small subunits (RfcS) and large subunits (RfcL).

Part of the RFC clamp loader complex which loads the PCNA sliding clamp onto DNA. The polypeptide is Replication factor C large subunit (Haloquadratum walsbyi (strain DSM 16790 / HBSQ001)).